The sequence spans 630 residues: Transferrin-binding protein B (630 aa).

The first 17 residues, 1–17 (MKSVPLITGGLSFLLSA), serve as a signal peptide directing secretion. The N-palmitoyl cysteine moiety is linked to residue C18. A lipid anchor (S-diacylglycerol cysteine) is attached at C18. 3 disordered regions span residues 26 to 53 (DVDDVSNPSSSKPRYQDDTSSSRTKSNL), 280 to 301 (VTPTKSTSDEHPFTSEGTLEGG), and 591 to 613 (NNPTATNSESSSTVPSPPNSPNA). Residues 32–50 (NPSSSKPRYQDDTSSSRTK) are compositionally biased toward polar residues.

This sequence belongs to the TbpB family.

It localises to the cell outer membrane. The protein localises to the cell surface. Haemophilus acquires iron by extracting it from serum transferrin (TF) in its human host. Acts as a transferrin receptor and is required for transferrin utilization. In Haemophilus influenzae (strain 86-028NP), this protein is Transferrin-binding protein B.